Here is a 207-residue protein sequence, read N- to C-terminus: Probable GTP-binding protein EngB (207 aa).

The region spanning 25–202 (DVPEIAFVGR…ATLLWQWAHP (178 aa)) is the EngB-type G domain. GTP is bound by residues 33-40 (GRSNAGKS), 60-64 (GRTQH), 82-85 (DLPG), 152-155 (TKAD), and 181-183 (FSA). Positions 40 and 62 each coordinate Mg(2+).

Belongs to the TRAFAC class TrmE-Era-EngA-EngB-Septin-like GTPase superfamily. EngB GTPase family. Mg(2+) serves as cofactor.

Its function is as follows. Necessary for normal cell division and for the maintenance of normal septation. The protein is Probable GTP-binding protein EngB of Albidiferax ferrireducens (strain ATCC BAA-621 / DSM 15236 / T118) (Rhodoferax ferrireducens).